Here is a 510-residue protein sequence, read N- to C-terminus: Solute carrier family 2, facilitated glucose transporter member 2 (510 aa).

The Cytoplasmic portion of the chain corresponds to 1–10; that stretch reads MTEDKVTGTL. Residues 11–31 traverse the membrane as a helical segment; the sequence is VLAVFTAVLSSFQFGYDIGVI. Topologically, residues 32–96 are extracellular; sequence NAPQQVIITH…SASLITMFWS (65 aa). Asparagine 62 carries an N-linked (GlcNAc...) asparagine glycan. Residues 97–117 form a helical membrane-spanning segment; sequence LSVSSFAVGGMIASFFGGLLG. At 118–122 the chain is on the cytoplasmic side; that stretch reads DKLGR. A helical transmembrane segment spans residues 123-143; sequence IKALLVANILSLVGALLMGFS. At 144-157 the chain is on the extracellular side; sequence KLGPSHILIISGRG. A helical membrane pass occupies residues 158 to 178; the sequence is ISGLYCGLISGLIPMYIGEIA. Over 179–191 the chain is Cytoplasmic; that stretch reads PTTLRGAIGALHQ. Glutamine 191 serves as a coordination point for D-glucose. Residues 192 to 212 traverse the membrane as a helical segment; that stretch reads LAIVTGILISQIVGLDFILGN. Residues 213–215 are Extracellular-facing; sequence HEL. Residues 216–236 traverse the membrane as a helical segment; the sequence is WHILLGLSAVPAILQCLLLFF. Residues 237-301 lie on the Cytoplasmic side of the membrane; that stretch reads CPESPRYLYI…LFTNASYRQP (65 aa). The chain crosses the membrane as a helical span at residues 302–322; sequence ILVALMLHAAQQFSGINGIFY. D-glucose is bound by residues 312–313 and asparagine 318; that span reads QQ. Residues 323 to 336 lie on the Extracellular side of the membrane; sequence YSTSIFQTAGISQP. The helical transmembrane segment at 337 to 357 threads the bilayer; sequence VYATIGVGAVNTVFTAVSVFL. A D-glucose-binding site is contributed by asparagine 347. The Cytoplasmic portion of the chain corresponds to 358 to 365; sequence VEKAGRRS. A helical membrane pass occupies residues 366–386; that stretch reads LFLIGMSGMFVCAIFMSVGLV. Residues 387-400 are Extracellular-facing; it reads LLSKFPWMNYVSMT. A helical membrane pass occupies residues 401–421; the sequence is AIFLFVSFFEIGPGPIPWFMV. Glutamate 410 and tryptophan 418 together coordinate D-glucose. Topologically, residues 422–431 are cytoplasmic; it reads AEFFSQGPRP. A helical transmembrane segment spans residues 432–452; it reads AALAIAAFSNWTGNFIIALCF. The Extracellular segment spans residues 453–454; that stretch reads QY. Residues 455-475 traverse the membrane as a helical segment; it reads IADFCGPYVFFLLLVWSWPLF. Topologically, residues 476-510 are cytoplasmic; the sequence is CSHFLKFQKPKENPLRKSQQSSERRGVQLKRQKLL. A disordered region spans residues 490-510; the sequence is LRKSQQSSERRGVQLKRQKLL.

Belongs to the major facilitator superfamily. Sugar transporter (TC 2.A.1.1) family. Glucose transporter subfamily. In terms of processing, N-glycosylated; required for stability and retention at the cell surface of pancreatic beta cells.

It is found in the cell membrane. The catalysed reaction is D-glucose(out) = D-glucose(in). It catalyses the reaction D-fructose(out) = D-fructose(in). The enzyme catalyses L-dehydroascorbate(out) = L-dehydroascorbate(in). It carries out the reaction D-galactose(in) = D-galactose(out). With respect to regulation, D-glucose and maltose competitively inhibit fructose transport. D-glucose, D-fructose and maltose inhibit deoxyglucose transport. Its function is as follows. Facilitative hexose transporter that mediates the transport of glucose, fructose and galactose. Likely mediates the bidirectional transfer of glucose across the plasma membrane of hepatocytes and is responsible for uptake of glucose by the beta cells; may comprise part of the glucose-sensing mechanism of the beta cell. May also participate with the Na(+)/glucose cotransporter in the transcellular transport of glucose in the small intestine and kidney. Also able to mediate the transport of dehydroascorbate. The chain is Solute carrier family 2, facilitated glucose transporter member 2 from Bos taurus (Bovine).